Reading from the N-terminus, the 467-residue chain is tRNA-2-methylthio-N(6)-dimethylallyladenosine synthase (467 aa).

The tract at residues 1-20 (MSDDTTQIEPAMAQETSPRA) is disordered. Residues 23–143 (RKVFVKTYGC…LPNALARVRG (121 aa)) enclose the MTTase N-terminal domain. 6 residues coordinate [4Fe-4S] cluster: cysteine 32, cysteine 68, cysteine 106, cysteine 184, cysteine 188, and cysteine 191. A Radical SAM core domain is found at 170–402 (RKRGVSAFLT…QALLSAQQYA (233 aa)). Residues 405–467 (DSMIGRKMDV…TNSLIAQKLA (63 aa)) form the TRAM domain.

Belongs to the methylthiotransferase family. MiaB subfamily. In terms of assembly, monomer. The cofactor is [4Fe-4S] cluster.

Its subcellular location is the cytoplasm. It carries out the reaction N(6)-dimethylallyladenosine(37) in tRNA + (sulfur carrier)-SH + AH2 + 2 S-adenosyl-L-methionine = 2-methylsulfanyl-N(6)-dimethylallyladenosine(37) in tRNA + (sulfur carrier)-H + 5'-deoxyadenosine + L-methionine + A + S-adenosyl-L-homocysteine + 2 H(+). Its function is as follows. Catalyzes the methylthiolation of N6-(dimethylallyl)adenosine (i(6)A), leading to the formation of 2-methylthio-N6-(dimethylallyl)adenosine (ms(2)i(6)A) at position 37 in tRNAs that read codons beginning with uridine. In Brucella abortus (strain S19), this protein is tRNA-2-methylthio-N(6)-dimethylallyladenosine synthase.